We begin with the raw amino-acid sequence, 524 residues long: Glutamyl-tRNA(Gln) amidotransferase subunit A (524 aa).

Residues Lys-109 and Ser-184 each act as charge relay system in the active site. Ser-208 (acyl-ester intermediate) is an active-site residue.

This sequence belongs to the amidase family. GatA subfamily. Heterotrimer of A, B and C subunits.

The catalysed reaction is L-glutamyl-tRNA(Gln) + L-glutamine + ATP + H2O = L-glutaminyl-tRNA(Gln) + L-glutamate + ADP + phosphate + H(+). Its function is as follows. Allows the formation of correctly charged Gln-tRNA(Gln) through the transamidation of misacylated Glu-tRNA(Gln) in organisms which lack glutaminyl-tRNA synthetase. The reaction takes place in the presence of glutamine and ATP through an activated gamma-phospho-Glu-tRNA(Gln). The protein is Glutamyl-tRNA(Gln) amidotransferase subunit A of Tropheryma whipplei (strain Twist) (Whipple's bacillus).